Consider the following 215-residue polypeptide: RNA pyrophosphohydrolase (215 aa).

In terms of domain architecture, Nudix hydrolase spans 6–149 (GFRPNVGIIL…KRDVYQLALT (144 aa)). A Nudix box motif is present at residues 38 to 59 (GGIKYGETPMQAMYRELHEETG).

This sequence belongs to the Nudix hydrolase family. RppH subfamily. A divalent metal cation is required as a cofactor.

Accelerates the degradation of transcripts by removing pyrophosphate from the 5'-end of triphosphorylated RNA, leading to a more labile monophosphorylated state that can stimulate subsequent ribonuclease cleavage. The sequence is that of RNA pyrophosphohydrolase from Burkholderia lata (strain ATCC 17760 / DSM 23089 / LMG 22485 / NCIMB 9086 / R18194 / 383).